We begin with the raw amino-acid sequence, 318 residues long: NADH-ubiquinone oxidoreductase chain 1 (318 aa).

Transmembrane regions (helical) follow at residues 2–22, 71–91, 98–118, 146–166, 171–191, 222–242, 253–273, and 294–314; these read FMVN…FLTL, YIIA…PLPI, INLG…SILW, LAII…STLI, HTWL…STLA, LFFM…ATIF, EFFS…FLWV, and LPLT…LANI.

This sequence belongs to the complex I subunit 1 family.

Its subcellular location is the mitochondrion inner membrane. It carries out the reaction a ubiquinone + NADH + 5 H(+)(in) = a ubiquinol + NAD(+) + 4 H(+)(out). In terms of biological role, core subunit of the mitochondrial membrane respiratory chain NADH dehydrogenase (Complex I) that is believed to belong to the minimal assembly required for catalysis. Complex I functions in the transfer of electrons from NADH to the respiratory chain. The immediate electron acceptor for the enzyme is believed to be ubiquinone. The polypeptide is NADH-ubiquinone oxidoreductase chain 1 (MT-ND1) (Nycticebus coucang (Slow loris)).